The primary structure comprises 273 residues: MPMDYQTEKHRGFAFVEFEEVEDAMSAIDNMNESEIFGRTIRVNVARPVRIREGWSRPVWSDENWLKKYGSAPLEGRKLDEPDIVNPSDTSENVEDLSDEEMRTKKQKRNLPRVFFDIRIGNGDAGRIVMELRSDIVPRTAENFRALCTGERGFGYHNCCFHRVIPQFMCQGGDFVKGDGTGGKSIYGRKFDDENFQLRHEGFGVLSMANSGPNTNGSQFFICTTKCDWLDGKHVVFGRVVDGQNVVKKMESVGSKSGKVKEPVIISRCGELI.

One can recognise an RRM domain in the interval 1 to 48; that stretch reads MPMDYQTEKHRGFAFVEFEEVEDAMSAIDNMNESEIFGRTIRVNVARP. A disordered region spans residues 77–103; that stretch reads RKLDEPDIVNPSDTSENVEDLSDEEMR. The 157-residue stretch at 115–271 folds into the PPIase cyclophilin-type domain; the sequence is FFDIRIGNGD…EPVIISRCGE (157 aa).

Belongs to the cyclophilin-type PPIase family. PPIase E subfamily.

It is found in the cytoplasm. The enzyme catalyses [protein]-peptidylproline (omega=180) = [protein]-peptidylproline (omega=0). With respect to regulation, binds cyclosporin A (CsA). CsA mediates some of its effects via an inhibitory action on PPIase. Its function is as follows. PPIases accelerate the folding of proteins. It catalyzes the cis-trans isomerization of proline imidic peptide bonds in oligopeptides. In Schistosoma mansoni (Blood fluke), this protein is Peptidyl-prolyl cis-trans isomerase E.